The following is a 502-amino-acid chain: Cysteine protease RavZ (502 aa).

2 consecutive short sequence motifs (LIR) follow at residues 9 to 23 and 23 to 37; these read DKLI…GEQE and ESDI…GDEK. The tract at residues 49–325 is catalytic region; that stretch reads SIYPPETSWE…ESALTEGKTL (277 aa). Active-site residues include His-176 and Asp-197. The segment at 211 to 217 is alpha-3 helix; that stretch reads YFKGKYR. Cys-258 is a catalytic residue. Residues 326-431 are membrane targeting region; that stretch reads PVQLSEFIVA…VLPCVKFDDT (106 aa). The LIR 3 signature appears at 429 to 443; sequence DDTIDDFVTIEKDEL.

The protein localises to the secreted. The protein resides in the host cytoplasmic vesicle membrane. The enzyme catalyses [protein]-C-terminal L-amino acid-glycyl-phosphatidylethanolamide + H2O = a 1,2-diacyl-sn-glycero-3-phosphoethanolamine-N-glycine + [protein]-C-terminal &lt;stereo&gt;L-&lt;/stereo&gt;amino acid. It catalyses the reaction [protein]-C-terminal L-amino acid-glycyl-phosphatidylserine + H2O = 1,2-diacyl-sn-glycero-3-phospho-L-serine-N-glycine + [protein]-C-terminal &lt;stereo&gt;L-&lt;/stereo&gt;amino acid. Functionally, cysteine protease effector that inhibits host cell autophagy by targeting lipid-conjugated ATG8 family proteins on pre-autophagosomal structures. Specifically hydrolyzes the amide bond between the C-terminal glycine residue and an adjacent aromatic residue in ATG8 proteins conjugated to phosphatidylethanolamine (PE), producing an ATG8 protein that cannot be reconjugated by host ATG7 and ATG3. Mechanistically, Ravz interacts with ATG8 proteins conjugated to PE via its LIR motifs, extracts them from the membrane of autophagosomes and integrates the PE part into its own lipid-binding site. It then removes the lipid component of the ATG8 protein. Also able to mediate delipidation of ATG8 proteins conjugated to phosphatidylserine (PS) during non-canonical autophagy. Inhibits host ubiquitin recruitment to bacteria-containing vacuoles, suggesting that it is able to mediate delipidation of other proteins in addition to ATG8 proteins. It is however not involved in the exclusion of autophagy adapters from bacteria-containing vacuoles decorated with ubiquitin. The polypeptide is Cysteine protease RavZ (Legionella pneumophila subsp. pneumophila (strain Philadelphia 1 / ATCC 33152 / DSM 7513)).